The sequence spans 404 residues: ATP phosphoribosyltransferase regulatory subunit (404 aa).

Belongs to the class-II aminoacyl-tRNA synthetase family. HisZ subfamily. In terms of assembly, heteromultimer composed of HisG and HisZ subunits.

The protein localises to the cytoplasm. It functions in the pathway amino-acid biosynthesis; L-histidine biosynthesis; L-histidine from 5-phospho-alpha-D-ribose 1-diphosphate: step 1/9. Its function is as follows. Required for the first step of histidine biosynthesis. May allow the feedback regulation of ATP phosphoribosyltransferase activity by histidine. This is ATP phosphoribosyltransferase regulatory subunit from Trichormus variabilis (strain ATCC 29413 / PCC 7937) (Anabaena variabilis).